Here is a 143-residue protein sequence, read N- to C-terminus: Deoxyuridine 5'-triphosphate nucleotidohydrolase (143 aa).

Residues 62 to 64, asparagine 75, and 79 to 81 contribute to the substrate site; these read RSG and TID.

This sequence belongs to the dUTPase family. Mg(2+) serves as cofactor.

It carries out the reaction dUTP + H2O = dUMP + diphosphate + H(+). Its pathway is pyrimidine metabolism; dUMP biosynthesis; dUMP from dCTP (dUTP route): step 2/2. Functionally, this enzyme is involved in nucleotide metabolism: it produces dUMP, the immediate precursor of thymidine nucleotides and it decreases the intracellular concentration of dUTP so that uracil cannot be incorporated into DNA. In Acaryochloris marina (strain MBIC 11017), this protein is Deoxyuridine 5'-triphosphate nucleotidohydrolase.